The primary structure comprises 435 residues: Eukaryotic translation initiation factor 3 subunit E (435 aa).

A PCI domain is found at 219–392; the sequence is FFNHAKGRDL…GHVVMGTQPL (174 aa).

This sequence belongs to the eIF-3 subunit E family. In terms of assembly, component of the eukaryotic translation initiation factor 3 (eIF-3) complex.

It is found in the cytoplasm. Component of the eukaryotic translation initiation factor 3 (eIF-3) complex, which is involved in protein synthesis of a specialized repertoire of mRNAs and, together with other initiation factors, stimulates binding of mRNA and methionyl-tRNAi to the 40S ribosome. The eIF-3 complex specifically targets and initiates translation of a subset of mRNAs involved in cell proliferation. This is Eukaryotic translation initiation factor 3 subunit E (eIF3-S6) from Culex quinquefasciatus (Southern house mosquito).